Here is a 195-residue protein sequence, read N- to C-terminus: MAREREGGGRGRREDREERDSEFVDKLVHINRVAKVVKGGRRFGFAALVVVGDQKGRVGFGHGKAREVPEAIRKATEAAKRGLIRVSLREGRTLHHDVNGRHGAGKVILRAAPQGTGIIAGGPMRAVFETLGMQDVVAKSLGSSNPYNLVRATFEALKNEDSPRSVAARRGIKVSTLQSRRRDADPADQSEAAVA.

Residues M1–D20 form a disordered region. Residues F23–V86 enclose the S5 DRBM domain. Residues D161–A195 form a disordered region.

The protein belongs to the universal ribosomal protein uS5 family. In terms of assembly, part of the 30S ribosomal subunit. Contacts proteins S4 and S8.

In terms of biological role, with S4 and S12 plays an important role in translational accuracy. Located at the back of the 30S subunit body where it stabilizes the conformation of the head with respect to the body. This chain is Small ribosomal subunit protein uS5, found in Methylobacterium radiotolerans (strain ATCC 27329 / DSM 1819 / JCM 2831 / NBRC 15690 / NCIMB 10815 / 0-1).